Here is a 219-residue protein sequence, read N- to C-terminus: Cytidylate kinase (219 aa).

Gly-21–Thr-29 serves as a coordination point for ATP.

The protein belongs to the cytidylate kinase family. Type 1 subfamily.

The protein resides in the cytoplasm. The enzyme catalyses CMP + ATP = CDP + ADP. It catalyses the reaction dCMP + ATP = dCDP + ADP. This chain is Cytidylate kinase, found in Rickettsia rickettsii (strain Iowa).